Here is a 130-residue protein sequence, read N- to C-terminus: Interferon alpha-inducible protein 27-like protein 2 (130 aa).

A run of 3 helical transmembrane segments spans residues 8-28 (AAVG…AMGF), 43-63 (MSAA…VATL), and 66-86 (VGAA…GSVL). Residues 93-130 (SPSSSLPAEPEAKEDEARENVPQGEPPKPPLKSEKHEE) form a disordered region.

Belongs to the IFI6/IFI27 family.

It is found in the mitochondrion membrane. Functionally, plays a role in the apoptotic process and has a pro-apoptotic activity. The polypeptide is Interferon alpha-inducible protein 27-like protein 2 (Homo sapiens (Human)).